We begin with the raw amino-acid sequence, 226 residues long: Transmembrane gamma-carboxyglutamic acid protein 4 (226 aa).

The signal sequence occupies residues 1-17; it reads MFPLLIVLSQLPRLTLA. The propeptide occupies 18 to 49; it reads VPHCIRSLKDSEHAPEEVFASKEAANIFMHRR. The Extracellular segment spans residues 50 to 113; the sequence is LLNNRFDLEL…GSDVNKEKID (64 aa). A Gla domain is found at 52 to 98; it reads NNRFDLELFTPGDLERECYEEFCSYEEAREILGDDENTIKFWQTYSI. Cys69 and Cys74 form a disulfide bridge. Glu72 carries the 4-carboxyglutamate modification. Residues 114–134 traverse the membrane as a helical segment; the sequence is VMSLLTGLIVAGVFLVIFGLV. At 135–226 the chain is on the cytoplasmic side; it reads GYYVCLTKCK…FKKSMSLPSH (92 aa). Ser164 bears the Phosphoserine mark. The short motif at 186–189 is the LPXY motif; mediates binding to WW domain-containing proteins element; it reads LPSY. The short motif at 204–207 is the PPXY motif; mediates binding to WW domain-containing proteins element; that stretch reads PPPY.

It belongs to the commissureless family. As to quaternary structure, interacts (via cytoplasmic domain) with WW domain-containing proteins MAGI1, MAGI3, NEDD4, NEDD4L, WWTR1/TAZ and YAP1. Post-translationally, gamma-carboxyglutamate residues are formed by vitamin K dependent carboxylation. These residues are essential for the binding of calcium.

The protein resides in the endoplasmic reticulum-Golgi intermediate compartment membrane. Its subcellular location is the cell membrane. Functionally, may control axon guidance across the CNS. Prevents the delivery of ROBO1 at the cell surface and down-regulates its expression. The sequence is that of Transmembrane gamma-carboxyglutamic acid protein 4 (Prrg4) from Mus musculus (Mouse).